Consider the following 324-residue polypeptide: tRNA uridine(34) hydroxylase (324 aa).

In terms of domain architecture, Rhodanese spans 127–221; the sequence is QQEETIVIDA…YGKDPEVQGE (95 aa). C181 functions as the Cysteine persulfide intermediate in the catalytic mechanism.

It belongs to the TrhO family.

The enzyme catalyses uridine(34) in tRNA + AH2 + O2 = 5-hydroxyuridine(34) in tRNA + A + H2O. In terms of biological role, catalyzes oxygen-dependent 5-hydroxyuridine (ho5U) modification at position 34 in tRNAs. The chain is tRNA uridine(34) hydroxylase from Bacillus cytotoxicus (strain DSM 22905 / CIP 110041 / 391-98 / NVH 391-98).